Reading from the N-terminus, the 246-residue chain is MPRYLEGWLADVVKISLNRERINKVRERPIYLLSKFIKSTIDKNAIIAEFKRKSPSGLNENRDLEEYVKFMEENGAIGISVLTEEKYFGGSYSDLENAAKIVKIPILMKDFIVTEKQIDTAFNLGADAILLIVKILTERELINLYEYARNLGLEAIVEVTDENDLKIALMYDFNIIGVNARNLSSLEVNIRNARKILEMIPNDRIKIAESGIKNKEDIIELKKYGADAFLIGTTLMKDPNKIKELI.

The protein belongs to the TrpC family.

The catalysed reaction is 1-(2-carboxyphenylamino)-1-deoxy-D-ribulose 5-phosphate + H(+) = (1S,2R)-1-C-(indol-3-yl)glycerol 3-phosphate + CO2 + H2O. It functions in the pathway amino-acid biosynthesis; L-tryptophan biosynthesis; L-tryptophan from chorismate: step 4/5. This Sulfurisphaera tokodaii (strain DSM 16993 / JCM 10545 / NBRC 100140 / 7) (Sulfolobus tokodaii) protein is Indole-3-glycerol phosphate synthase.